The primary structure comprises 201 residues: Small ribosomal subunit protein uS4c (201 aa).

The disordered stretch occupies residues 15–43 (LGALPGLTSKRPRSGSDLRNQSRSGKRSQ). Residues 89–150 (MRLDNILFRL…KERSRALIQN (62 aa)) form the S4 RNA-binding domain.

Belongs to the universal ribosomal protein uS4 family. Part of the 30S ribosomal subunit. Contacts protein S5. The interaction surface between S4 and S5 is involved in control of translational fidelity.

It localises to the plastid. Its subcellular location is the chloroplast. Functionally, one of the primary rRNA binding proteins, it binds directly to 16S rRNA where it nucleates assembly of the body of the 30S subunit. With S5 and S12 plays an important role in translational accuracy. The sequence is that of Small ribosomal subunit protein uS4c (rps4) from Amborella trichopoda.